A 387-amino-acid chain; its full sequence is Anhydro-N-acetylmuramic acid kinase (387 aa).

Position 9–16 (Gly-9–Asp-16) interacts with ATP.

The protein belongs to the anhydro-N-acetylmuramic acid kinase family.

It catalyses the reaction 1,6-anhydro-N-acetyl-beta-muramate + ATP + H2O = N-acetyl-D-muramate 6-phosphate + ADP + H(+). Its pathway is amino-sugar metabolism; 1,6-anhydro-N-acetylmuramate degradation. The protein operates within cell wall biogenesis; peptidoglycan recycling. Its function is as follows. Catalyzes the specific phosphorylation of 1,6-anhydro-N-acetylmuramic acid (anhMurNAc) with the simultaneous cleavage of the 1,6-anhydro ring, generating MurNAc-6-P. Is required for the utilization of anhMurNAc either imported from the medium or derived from its own cell wall murein, and thus plays a role in cell wall recycling. The polypeptide is Anhydro-N-acetylmuramic acid kinase (Synechocystis sp. (strain ATCC 27184 / PCC 6803 / Kazusa)).